Reading from the N-terminus, the 386-residue chain is Acyl-lipid omega-3 desaturase (cytochrome b5), endoplasmic reticulum (386 aa).

The tract at residues 1–30 (MVVAMDQRTNVNGDPGAGDRKKEERFDPSA) is disordered. The segment covering 17–27 (AGDRKKEERFD) has biased composition (basic and acidic residues). The helical transmembrane segment at 63 to 83 (IIAVAALAIAAVYVDSWFLWP) threads the bilayer. The short motif at 101-105 (HDCGH) is the Histidine box-1 element. Positions 137–141 (HRTHH) match the Histidine box-2 motif. 2 helical membrane passes run 220–240 (WSIMFVSLIALSFVFGPLAVL) and 242–262 (VYGVPYIIFVMWLDAVTYLHH). Positions 304–308 (HVIHH) match the Histidine box-3 motif.

This sequence belongs to the fatty acid desaturase type 1 family. In terms of tissue distribution, abundant in leaves and seedlings. Barely detectable in root tissue.

It localises to the endoplasmic reticulum membrane. It carries out the reaction a (9Z,12Z)-octadecadienoyl-containing glycerolipid + 2 Fe(II)-[cytochrome b5] + O2 + 2 H(+) = (9Z,12Z,15Z)-octadecatrienoyl-containing glycerolipid + 2 Fe(III)-[cytochrome b5] + 2 H2O. It functions in the pathway lipid metabolism; polyunsaturated fatty acid biosynthesis. In terms of biological role, microsomal (ER) omega-3 fatty acid desaturase introduces the third double bond in the biosynthesis of 18:3 fatty acids, important constituents of plant membranes. It is thought to use cytochrome b5 as an electron donor and to act on fatty acids esterified to phosphatidylcholine and, possibly, other phospholipids. The protein is Acyl-lipid omega-3 desaturase (cytochrome b5), endoplasmic reticulum of Arabidopsis thaliana (Mouse-ear cress).